Here is an 89-residue protein sequence, read N- to C-terminus: Large ribosomal subunit protein bL27 (89 aa).

Residues 1-21 (MAHKKAGGSSRNGRDSQSKRL) form a disordered region.

The protein belongs to the bacterial ribosomal protein bL27 family.

This is Large ribosomal subunit protein bL27 from Rhizobium leguminosarum bv. trifolii (strain WSM2304).